The following is a 98-amino-acid chain: Alpha-elicitin capsicein (98 aa).

Cystine bridges form between Cys3/Cys71, Cys27/Cys56, and Cys51/Cys95.

It belongs to the elicitin family.

It is found in the secreted. In terms of biological role, induces local and distal defense responses (incompatible hypersensitive reaction) in plants from the solanaceae and cruciferae families. Elicits leaf necrosis and causes the accumulation of pathogenesis-related proteins. Might interact with the lipidic molecules of the plasma membrane. The sequence is that of Alpha-elicitin capsicein from Phytophthora capsici.